We begin with the raw amino-acid sequence, 417 residues long: NADH-quinone oxidoreductase subunit D (417 aa).

The protein belongs to the complex I 49 kDa subunit family. In terms of assembly, NDH-1 is composed of 14 different subunits. Subunits NuoB, C, D, E, F, and G constitute the peripheral sector of the complex.

The protein resides in the cell inner membrane. It carries out the reaction a quinone + NADH + 5 H(+)(in) = a quinol + NAD(+) + 4 H(+)(out). In terms of biological role, NDH-1 shuttles electrons from NADH, via FMN and iron-sulfur (Fe-S) centers, to quinones in the respiratory chain. The immediate electron acceptor for the enzyme in this species is believed to be ubiquinone. Couples the redox reaction to proton translocation (for every two electrons transferred, four hydrogen ions are translocated across the cytoplasmic membrane), and thus conserves the redox energy in a proton gradient. This chain is NADH-quinone oxidoreductase subunit D, found in Ruthia magnifica subsp. Calyptogena magnifica.